The chain runs to 216 residues: MAEALLPLPRRLVVTASTPACSSASSSTSPSPHCLLSRANPRPPRLAAPSPPRHRRLKAHAAVSDKSEQPKWWEKNAGPNMIDIHSTQEFLDALRDAGDRLVIVEFYGTWCGSCRALFPRLCRTAVENPDILFLKVNFDENKPMCKRLNVKVLPYFHFYRGADGQLEAFSCSLAKFQKLKDAIAVHNTARCSIGPPVGVGDVLDSPEEKPAEASPR.

The transit peptide at 1–58 (MAEALLPLPRRLVVTASTPACSSASSSTSPSPHCLLSRANPRPPRLAAPSPPRHRRLK) directs the protein to the chloroplast. A compositionally biased stretch (low complexity) spans 19–40 (PACSSASSSTSPSPHCLLSRAN). A disordered region spans residues 19–70 (PACSSASSSTSPSPHCLLSRANPRPPRLAAPSPPRHRRLKAHAAVSDKSEQP). Positions 41–51 (PRPPRLAAPSP) are enriched in pro residues. Residues 61 to 188 (AAVSDKSEQP…LKDAIAVHNT (128 aa)) form the Thioredoxin domain. Active-site nucleophile residues include Cys-111 and Cys-114. An intrachain disulfide couples Cys-111 to Cys-114.

Belongs to the thioredoxin family.

The protein localises to the plastid. Its subcellular location is the chloroplast. Probable thiol-disulfide oxidoreductase that may participate in various redox reactions. The polypeptide is Thioredoxin-like 2, chloroplastic (Oryza sativa subsp. japonica (Rice)).